We begin with the raw amino-acid sequence, 86 residues long: RNA-binding protein Hfq (86 aa).

The Sm domain maps to 9–68 (DPYLNTLRKEKVPVSIYLVNGIKLQGSIESFDQFVVLLKNTVSQMVYKHAISTVVPARPV). Residues 66–86 (RPVRLPSPSDSEHGDSEPGNA) form a disordered region. A compositionally biased stretch (basic and acidic residues) spans 75–86 (DSEHGDSEPGNA).

The protein belongs to the Hfq family. In terms of assembly, homohexamer.

Functionally, RNA chaperone that binds small regulatory RNA (sRNAs) and mRNAs to facilitate mRNA translational regulation in response to envelope stress, environmental stress and changes in metabolite concentrations. Also binds with high specificity to tRNAs. The sequence is that of RNA-binding protein Hfq from Pseudomonas putida (strain W619).